A 566-amino-acid polypeptide reads, in one-letter code: Multidrug and toxin extrusion protein 1 (566 aa).

An N-acetylmethionine modification is found at M1. 13 consecutive transmembrane segments (helical) span residues 37–57 (LLVLAGPAFLAQLMMFLISFI), 72–92 (AVTLAIAVINVTGISVGHGLS), 120–140 (LILLLCCFPCWALFINTEQIL), 152–172 (LTQTYVMVFIPALPAAFLYTL), 176–196 (YLLNQGIVLPQVITGIAANLV), 216–236 (ALANTISQFALAIFLFLYILW), 257–276 (SFLQLAIPSMLMLCIEWWAY), 295–315 (SITYELAIIVYMIPAGFSVAA), 336–356 (AISLIVTELFAVTFCVLLLGC), 370–390 (IVALVAQVVPIYAVSHLFEAL), 409–429 (IVNAIGYYVIGLPIGISLMFV), 437–457 (LWSGIIICSVCQTSCFLVFIA), and 543–563 (GLLFLGVVLVLVGGILVRVYI).

This sequence belongs to the multi antimicrobial extrusion (MATE) (TC 2.A.66.1) family. Highly expressed in kidney and placenta, moderately in stomach, colon, lung, spleen, skeletal muscle and prostate, and slightly in spleen. In the kidney, found in medulla and cortex, especially in the proximal convoluted and straight tubules. No expression was observed in heart, brain, small intestine and liver. Expressed in Sertoli cells in testis.

It is found in the cell membrane. The protein resides in the apical cell membrane. The enzyme catalyses thiamine(out) + H(+)(in) = thiamine(in) + H(+)(out). It carries out the reaction estrone 3-sulfate(in) + H(+)(out) = estrone 3-sulfate(out) + H(+)(in). It catalyses the reaction creatinine(in) + H(+)(out) = creatinine(out) + H(+)(in). The catalysed reaction is agmatine(in) + H(+)(out) = agmatine(out) + H(+)(in). Functionally, multidrug efflux pump that functions as a H(+)/organic cation antiporter. Plays a physiological role in the excretion of cationic compounds including endogenous metabolites, drugs, toxins through the kidney and liver, into urine and bile respectively. Mediates the efflux of endogenous compounds such as creatinine, vitamin B1/thiamine, agmatine and estrone-3-sulfate. May also contribute to regulate the transport of cationic compounds in testis across the blood-testis-barrier. This is Multidrug and toxin extrusion protein 1 (Slc47a1) from Rattus norvegicus (Rat).